The sequence spans 234 residues: tRNA (guanine-N(1)-)-methyltransferase (234 aa).

S-adenosyl-L-methionine contacts are provided by residues Gly112 and 132 to 137 (IGDFIL).

This sequence belongs to the RNA methyltransferase TrmD family. In terms of assembly, homodimer.

The protein resides in the cytoplasm. It carries out the reaction guanosine(37) in tRNA + S-adenosyl-L-methionine = N(1)-methylguanosine(37) in tRNA + S-adenosyl-L-homocysteine + H(+). In terms of biological role, specifically methylates guanosine-37 in various tRNAs. The protein is tRNA (guanine-N(1)-)-methyltransferase of Campylobacter jejuni subsp. jejuni serotype O:6 (strain 81116 / NCTC 11828).